The following is a 206-amino-acid chain: Small ribosomal subunit protein uS5 (206 aa).

The span at 1–15 shows a compositional bias: polar residues; the sequence is MTDTPTKQEIQSKND. Residues 1–50 are disordered; sequence MTDTPTKQEIQSKNDNVPGATPVEQKKNNRNDRKRNRRGDSKNLERDSDW. Residues 38–50 are compositionally biased toward basic and acidic residues; the sequence is RGDSKNLERDSDW. One can recognise an S5 DRBM domain in the interval 50–113; the sequence is WQERVVQIRR…SDGKKNLVRV (64 aa).

This sequence belongs to the universal ribosomal protein uS5 family. Part of the 30S ribosomal subunit. Contacts proteins S4 and S8.

In terms of biological role, with S4 and S12 plays an important role in translational accuracy. Its function is as follows. Located at the back of the 30S subunit body where it stabilizes the conformation of the head with respect to the body. The polypeptide is Small ribosomal subunit protein uS5 (Prochlorococcus marinus (strain MIT 9301)).